Reading from the N-terminus, the 197-residue chain is Adenylyl-sulfate kinase (197 aa).

Residue 31 to 38 (GLSGAGKS) coordinates ATP. Ser-105 functions as the Phosphoserine intermediate in the catalytic mechanism.

Belongs to the APS kinase family.

The enzyme catalyses adenosine 5'-phosphosulfate + ATP = 3'-phosphoadenylyl sulfate + ADP + H(+). It functions in the pathway sulfur metabolism; hydrogen sulfide biosynthesis; sulfite from sulfate: step 2/3. Its function is as follows. Catalyzes the synthesis of activated sulfate. The protein is Adenylyl-sulfate kinase of Aeromonas hydrophila subsp. hydrophila (strain ATCC 7966 / DSM 30187 / BCRC 13018 / CCUG 14551 / JCM 1027 / KCTC 2358 / NCIMB 9240 / NCTC 8049).